The sequence spans 723 residues: Envelope glycoprotein H (723 aa).

Positions 1 to 23 (MSPATRFTVISCLVVSLITPSET) are cleaved as a signal peptide. The Virion surface segment spans residues 24 to 700 (SSWFDPFIEW…IIDIRQTSIF (677 aa)). 4 N-linked (GlcNAc...) asparagine; by host glycosylation sites follow: asparagine 39, asparagine 45, asparagine 144, and asparagine 174. Residues 197 to 263 (HQFAIVLTFT…QSYRDDLLIV (67 aa)) are interaction with gL. Asparagine 270, asparagine 340, asparagine 411, asparagine 543, asparagine 621, and asparagine 681 each carry an N-linked (GlcNAc...) asparagine; by host glycan. A helical membrane pass occupies residues 701–721 (MIMLYCSLGVLLLYGLYRLLH). Residues 722-723 (MI) are Intravirion-facing.

It belongs to the herpesviridae glycoprotein H family. In terms of assembly, interacts with glycoprotein L (gL); this interaction is necessary for the correct processing and cell surface expression of gH. The heterodimer gH/gL seems to interact with gB trimers during fusion. Post-translationally, N-glycosylated, O-glycosylated, and sialylated.

Its subcellular location is the virion membrane. The protein resides in the host cell membrane. The protein localises to the host endosome membrane. Its function is as follows. The heterodimer glycoprotein H-glycoprotein L is required for the fusion of viral and plasma membranes leading to virus entry into the host cell. Following initial binding to host receptor, membrane fusion is mediated by the fusion machinery composed of gB and the heterodimer gH/gL. May also be involved in the fusion between the virion envelope and the outer nuclear membrane during virion morphogenesis. The protein is Envelope glycoprotein H of Guinea pig cytomegalovirus (strain 22122) (GPCMV).